A 237-amino-acid polypeptide reads, in one-letter code: Ribonuclease PH (237 aa).

Residues Arg-86 and 124–126 (GTR) each bind phosphate.

It belongs to the RNase PH family. In terms of assembly, homohexameric ring arranged as a trimer of dimers.

It catalyses the reaction tRNA(n+1) + phosphate = tRNA(n) + a ribonucleoside 5'-diphosphate. In terms of biological role, phosphorolytic 3'-5' exoribonuclease that plays an important role in tRNA 3'-end maturation. Removes nucleotide residues following the 3'-CCA terminus of tRNAs; can also add nucleotides to the ends of RNA molecules by using nucleoside diphosphates as substrates, but this may not be physiologically important. Probably plays a role in initiation of 16S rRNA degradation (leading to ribosome degradation) during starvation. This Coxiella burnetii (strain RSA 331 / Henzerling II) protein is Ribonuclease PH.